The chain runs to 950 residues: MKLSELFNPNEFAARHLSFGDEAALLAAVGEKSMDEFVGNTLPQSIRMPSELDLPEALTEADALAKLKGIASKNVINKSYIGLGYYPTRVPNVILRNVLENPGWYTAYTPYQAEIAQGRLEALLNFQQVCIDLTGFPVAGASLLDEATAAAEAMAMAHRVGKVKSERFFVDARVYPQTLDVMKTRAKYFGFELVVSDFAQADEGEYFGALFQYVGKDGDVQDLQDVIGRLKAKGTIVAVAADIMSLVLLKSPAELGADIALGNTQRFGVPMGFGGPHAAYFAFKDEFKRSAPGRIIGVSKDASGKPALRMALSTREQHIRREKATSNICTAQALLANLAGMYAVYHGPKGVKRIANRIHTLASVFADALVSDGLKVVHEVFFDTVTVDFGSKEKADQVFAAALESGYNLRSVNNTQVAAAFHETSVYEDLADLYRAFTGKDTFTFADDVKGRLNAELLRQDDILQHPVYNSYHTEHEMLRYLKKLEDRDLAMNRSMISLGSCTMKLNATAEMLPITWTEFSDIHPYAPEAQTAGYRELLADMENSLKAITGFDAISFQPNSGAQGEYSGMLAIRRYQEAQGEAHRNICLIPKSAHGTNPATAAMLGLKVVVVDTDEHGNVNIDDLKAKAEQHRDALSAIMITYPSTHGVYEEGIRDICRIIHENGGQVYMDGANLNAQIGIMQPAEVGADVLHMNLHKTFCIPHGGGGPGMGPIGLKAHLAPFAPGHTLTDTHSASAGQTSVAAAAFGSASILPITWMYLTMMGKQGMEQATRWALLNANYVAKRLSEDYPILYTGKNGRIAHECIVDLRPLKAESGITETDIAKRLMDYGFHAPTVSFPVAGTLMIEPTESESKAELDRFIAALKSIRREVQKVIDGEWPKDDNPLVNAPHTAADITGEWAHPYSREEAVFPLPFVREHKFWPFVNRVDDVYGDRNLVCSCPPMENYED.

Lys-698 is subject to N6-(pyridoxal phosphate)lysine.

The protein belongs to the GcvP family. In terms of assembly, the glycine cleavage system is composed of four proteins: P, T, L and H. Requires pyridoxal 5'-phosphate as cofactor.

It carries out the reaction N(6)-[(R)-lipoyl]-L-lysyl-[glycine-cleavage complex H protein] + glycine + H(+) = N(6)-[(R)-S(8)-aminomethyldihydrolipoyl]-L-lysyl-[glycine-cleavage complex H protein] + CO2. Functionally, the glycine cleavage system catalyzes the degradation of glycine. The P protein binds the alpha-amino group of glycine through its pyridoxal phosphate cofactor; CO(2) is released and the remaining methylamine moiety is then transferred to the lipoamide cofactor of the H protein. This chain is Glycine dehydrogenase (decarboxylating), found in Neisseria gonorrhoeae (strain ATCC 700825 / FA 1090).